An 88-amino-acid chain; its full sequence is Hemotin (88 aa).

The Lumenal portion of the chain corresponds to 1-14 (MDCFKVFEVVFQSE). A helical membrane pass occupies residues 15 to 37 (INPLLLIPAVATIALTLCCYCYH). Topologically, residues 38–88 (GYQWIRDRRTARIEEQQAQLPLPLSRISITPGCSMVATTKLTHSRNSVDIY) are cytoplasmic.

Interacts with 14-3-3zeta. As to expression, expressed in hemocytes.

The protein localises to the early endosome membrane. Negatively regulates early endosome maturation by binding to and repressing the activity of 14-3-3zeta which prevents the 14-3-3zeta-mediated activation of phosphoinositide 3-kinase Pi3K68D. This, in turn, inhibits the Pi3K68D-mediated conversion of phosphatidylinositol to phosphatidylinositol-3-phosphate and prevents progression of early endosomes through the maturation process which regulates subsequent steps of phagocytic processing. The polypeptide is Hemotin (Drosophila melanogaster (Fruit fly)).